The following is a 346-amino-acid chain: N-acetyl-gamma-glutamyl-phosphate reductase (346 aa).

Cys-151 is an active-site residue.

The protein belongs to the NAGSA dehydrogenase family. Type 1 subfamily.

It is found in the cytoplasm. It catalyses the reaction N-acetyl-L-glutamate 5-semialdehyde + phosphate + NADP(+) = N-acetyl-L-glutamyl 5-phosphate + NADPH + H(+). It participates in amino-acid biosynthesis; L-arginine biosynthesis; N(2)-acetyl-L-ornithine from L-glutamate: step 3/4. Catalyzes the NADPH-dependent reduction of N-acetyl-5-glutamyl phosphate to yield N-acetyl-L-glutamate 5-semialdehyde. This Ehrlichia chaffeensis (strain ATCC CRL-10679 / Arkansas) protein is N-acetyl-gamma-glutamyl-phosphate reductase.